Consider the following 370-residue polypeptide: 3-dehydroquinate synthase (370 aa).

NAD(+) is bound by residues 108–112, 132–133, Lys145, and Lys154; these read GVVGD and TT. Zn(2+)-binding residues include Glu187, His250, and His268.

The protein belongs to the sugar phosphate cyclases superfamily. Dehydroquinate synthase family. It depends on Co(2+) as a cofactor. Requires Zn(2+) as cofactor. NAD(+) serves as cofactor.

It is found in the cytoplasm. It catalyses the reaction 7-phospho-2-dehydro-3-deoxy-D-arabino-heptonate = 3-dehydroquinate + phosphate. The protein operates within metabolic intermediate biosynthesis; chorismate biosynthesis; chorismate from D-erythrose 4-phosphate and phosphoenolpyruvate: step 2/7. Catalyzes the conversion of 3-deoxy-D-arabino-heptulosonate 7-phosphate (DAHP) to dehydroquinate (DHQ). The chain is 3-dehydroquinate synthase from Caulobacter vibrioides (strain NA1000 / CB15N) (Caulobacter crescentus).